A 346-amino-acid polypeptide reads, in one-letter code: Enkurin domain-containing protein 1 (346 aa).

3 disordered regions span residues 1 to 24 (MCEG…DYYR), 88 to 107 (SGVS…NLRR), and 113 to 132 (RRFQ…PLKA). Serine 91 carries the phosphoserine modification. Basic and acidic residues-rich tracts occupy residues 98–107 (KDHEKENLRR) and 113–125 (RRFQ…REQG). Phosphoserine is present on serine 136. In terms of domain architecture, Enkurin spans 251-343 (ERRDLWRKEA…IFSRPKVFVK (93 aa)). The interval 259–280 (EAEARQRSQPDPSMPPGHTLMP) is disordered.

In terms of assembly, interacts with alpha-tubulin. Interacts (via central region) with CCP110 (via N-terminal region); competes with CEP97 for binding to CCP110. As to expression, widely expressed with highest levels in testis and lung.

It is found in the cytoplasm. The protein localises to the cytoskeleton. It localises to the microtubule organizing center. The protein resides in the centrosome. Its subcellular location is the centriole. It is found in the cilium basal body. The protein localises to the cell projection. It localises to the cilium. The protein resides in the spindle. Its subcellular location is the spindle pole. It is found in the cilium axoneme. Its function is as follows. Microtubule-binding protein which regulates microtubule organization and stability. Promotes the stability of astral microtubules and facilitates the proper orientation of the mitotic spindle. This allows the oriented division of basal keratinocytes and contributes to epidermal stratification. Required for the assembly of both primary and motile cilia. Destabilizes the interaction between CCP110 and CEP97 by competing with CEP97 for binding to CCP110 which promotes the removal of CCP110 and CEP97 from the mother centriole and allows the initiation of ciliogenesis. The chain is Enkurin domain-containing protein 1 (Enkd1) from Mus musculus (Mouse).